Reading from the N-terminus, the 691-residue chain is Ribonuclease J (691 aa).

A disordered region spans residues 1-89 (MTDNNHYENN…TRNYAKEELD (89 aa)). The loss of region decreases protein stability, still able to interact with RhpA, but has decreased RNase activity even on ssRNA stretch occupies residues 1–132 (MTDNNHYENN…KIQVEHLNPH (132 aa)). Residues 10–19 (NESNENSSEN) are compositionally biased toward low complexity. Residues 41 to 57 (RENAQKNGESSHHEAPS) are compositionally biased toward basic and acidic residues. Positions 58–82 (HHKKEHRPNKKPNNHHKQKHAKTRN) are enriched in basic residues. Lysine 134 and lysine 140 each carry N6-acetyllysine. Zn(2+) is bound by residues histidine 208, histidine 210, aspartate 212, histidine 213, histidine 277, and aspartate 299. Residues lysine 323, lysine 337, and lysine 397 each carry the N6-acetyllysine modification. Substrate is bound at residue 500–504 (HVSGH). An N6-acetyllysine modification is found at lysine 511. Zn(2+) is bound at residue histidine 526. An N6-acetyllysine mark is found at lysine 547, lysine 634, and lysine 649.

It belongs to the metallo-beta-lactamase superfamily. RNA-metabolizing metallo-beta-lactamase-like family. Bacterial RNase J subfamily. In terms of assembly, homodimer. Homotetramer; dimer of homodimers. Interacts with RNA helicase RphA, might be a member of a minimal RNA degradosome complex. Zn(2+) serves as cofactor. In terms of processing, acetylated on nine lysine residues. Some of the residues are acetylated by multiple different mechanisms. RimL is partially responsible for the acetylation of Lys-323, Lys-397 and Lys-649. HPB8_1270 homolog is partially responsible for the acetylation of Lys-323, Lys-397, Lys-511 and Lys-649. Acetyl-phosphate-mediated non-enzymatic acetylation pathway takes part in the acetylation of Lys-134, Lys-323, Lys-397, Lys-511 and Lys-649. Acetylation of the remaining residues Lys-140, Lys-337, Lys-547 and Lys-634 occurs by a yet undetermined mechanism. Acetylation on a number of these residues is important for growth regulation and proper cell morphology.

It is found in the cytoplasm. Catalytic activity is regulated by the balance between homodimers and homotetramers, with homotetramers being the active forms of this enzyme. Acetylation allosterically regulates the homooligomerization state and hence the catalytic activity. Its function is as follows. An RNase that has 5'-3' exoribonuclease and endoribonuclease activity. Degrades 5'-monophosphorylated ssRNA and dsRNA, considerably more active on ssRNA. Association with RhpA significantly increases the dsRNase activity. Degrades RNA substrate with hairpin structures at both ends with low activity, but presence of RhpA significantly increases the activity on this substrate. Stimulates ATPase activity of RNA helicase RhpA. Involved in stabilization of mRNA but apparently not rRNA. The chain is Ribonuclease J from Helicobacter pylori (strain B128).